A 172-amino-acid chain; its full sequence is Peptidyl-prolyl cis-trans isomerase (172 aa).

Residues 7-170 (FFDMSVGGQP…KKVVVEDCGQ (164 aa)) enclose the PPIase cyclophilin-type domain.

The protein belongs to the cyclophilin-type PPIase family. In terms of processing, not glycosylated. In terms of tissue distribution, expressed in pollen.

Its subcellular location is the cytoplasm. The enzyme catalyses [protein]-peptidylproline (omega=180) = [protein]-peptidylproline (omega=0). Binds cyclosporin A (CsA). CsA mediates some of its effects via an inhibitory action on PPIase. PPIases accelerate the folding of proteins. It catalyzes the cis-trans isomerization of proline imidic peptide bonds in oligopeptides. This Catharanthus roseus (Madagascar periwinkle) protein is Peptidyl-prolyl cis-trans isomerase (PCKR1).